Here is a 941-residue protein sequence, read N- to C-terminus: HMG box transcription factor BBX (941 aa).

The segment covering 1–18 (MKGSNRNKDHSAEGEGVG) has biased composition (basic and acidic residues). Disordered regions lie at residues 1–21 (MKGSNRNKDHSAEGEGVGKRP), 39–80 (FSEE…EQRA), 157–200 (VKSP…FGMA), and 221–242 (TPEVSSGTCRPDVSESPELRQK). Acidic residues-rich tracts occupy residues 39–52 (FSEEEEEEDEEEDI) and 63–75 (LEQDVGETEDDES). Residues 80 to 148 (ARRPMNAFLL…AFMKANPGYK (69 aa)) constitute a DNA-binding region (HMG box). Residues 177-191 (SSRDLPSPKKAKTEE) show a composition bias toward basic and acidic residues. Serine 243 carries the post-translational modification Phosphoserine. A coiled-coil region spans residues 326 to 370 (GRIKELEKGKEEKEIKMEKTDETRLQKEAEFEKSAKENLRDSKEL). Residue lysine 385 forms a Glycyl lysine isopeptide (Lys-Gly) (interchain with G-Cter in SUMO2) linkage. The tract at residues 438–482 (IEDPAALNKPEKLKKKKKKSKMDRHGNDKSTPKKTCKKRQSSESD) is disordered. Over residues 449-459 (KLKKKKKKSKM) the composition is skewed to basic residues. Phosphoserine occurs at positions 478 and 485. 2 stretches are compositionally biased toward basic and acidic residues: residues 499–508 (GIEKLGDTPR) and 536–552 (KKMSKEKSSDTTKESRP). Disordered regions lie at residues 499–600 (GIEK…SDCH) and 635–677 (NVDR…KKTK). A Glycyl lysine isopeptide (Lys-Gly) (interchain with G-Cter in SUMO2) cross-link involves residue lysine 573. Residues 661–670 (TFSQSGTSGS) show a composition bias toward low complexity. A Glycyl lysine isopeptide (Lys-Gly) (interchain with G-Cter in SUMO2) cross-link involves residue lysine 696. Serine 704 bears the Phosphoserine mark. 3 disordered regions span residues 714-771 (PVPR…DKWS), 803-888 (IPSI…SSTP), and 912-941 (HRGQRSTPLTHDGQPKEMPQAPVLISCADQ). Residues 723 to 742 (GNVSSEPTKTSKGPFQSQKK) show a composition bias toward polar residues. A compositionally biased stretch (basic residues) spans 743–757 (NLFHKIVSKYKHKKE). The span at 758-771 (KPNVPEKGSGDKWS) shows a compositional bias: basic and acidic residues. Polar residues predominate over residues 805 to 817 (SIFNTPEPTTTQE). Serine 822 is modified (phosphoserine). The segment covering 823–834 (QKRKARKTKITH) has biased composition (basic residues). Serine 844 carries the post-translational modification Phosphoserine. Basic and acidic residues predominate over residues 866 to 882 (TETDCNDKCSHNTEVGE).

Its subcellular location is the nucleus. Functionally, transcription factor that is necessary for cell cycle progression from G1 to S phase. The sequence is that of HMG box transcription factor BBX (BBX) from Homo sapiens (Human).